Reading from the N-terminus, the 164-residue chain is MLMPTYFLLPLLLLLGGPRTSLSHKFYNTGPVFSCLNTALSEVKKNKLEDVPLLSKKSFGHLPTQDPSGEEDDNQTHLQIKRTFSGAAGGNGAGSTRYRYQSQAQHKGKLYPDKPKSDRGTKFTLSLDVPTNIMNILFNIDKAKNLRAKAAANAQLMAQIGKKK.

A signal peptide spans 1 to 23 (MLMPTYFLLPLLLLLGGPRTSLS). A propeptide spanning residues 24-121 (HKFYNTGPVF…PDKPKSDRGT (98 aa)) is cleaved from the precursor. The segment at 58-120 (SFGHLPTQDP…YPDKPKSDRG (63 aa)) is disordered. Over residues 110 to 120 (LYPDKPKSDRG) the composition is skewed to basic and acidic residues. I160 is subject to Isoleucine amide.

This sequence belongs to the sauvagine/corticotropin-releasing factor/urotensin I family. In terms of assembly, binds with high affinity to CRF receptors 2-alpha and 2-beta. As to expression, expressed in some areas of the brain including the hypothalamus, amygdala, and brainstem, but is not evident in the cerebellum, pituitary, or cerebral cortex; it is also expressed peripherally in small intestine and skin.

It is found in the secreted. Suppresses food intake, delays gastric emptying and decreases heat-induced edema. Might represent an endogenous ligand for maintaining homeostasis after stress. The protein is Urocortin-3 (Ucn3) of Mus musculus (Mouse).